A 309-amino-acid chain; its full sequence is Protein FdhE (309 aa).

Belongs to the FdhE family.

Its subcellular location is the cytoplasm. Necessary for formate dehydrogenase activity. The sequence is that of Protein FdhE from Escherichia coli O45:K1 (strain S88 / ExPEC).